We begin with the raw amino-acid sequence, 145 residues long: Protein FimA (145 aa).

Belongs to the fimbrial protein family.

It localises to the fimbrium. This chain is Protein FimA (fimA), found in Bordetella pertussis.